A 493-amino-acid chain; its full sequence is Guanosine-5'-triphosphate,3'-diphosphate pyrophosphatase (493 aa).

This sequence belongs to the GppA/Ppx family. GppA subfamily.

The catalysed reaction is guanosine 3'-diphosphate 5'-triphosphate + H2O = guanosine 3',5'-bis(diphosphate) + phosphate + H(+). The protein operates within purine metabolism; ppGpp biosynthesis; ppGpp from GTP: step 2/2. Catalyzes the conversion of pppGpp to ppGpp. Guanosine pentaphosphate (pppGpp) is a cytoplasmic signaling molecule which together with ppGpp controls the 'stringent response', an adaptive process that allows bacteria to respond to amino acid starvation, resulting in the coordinated regulation of numerous cellular activities. The chain is Guanosine-5'-triphosphate,3'-diphosphate pyrophosphatase from Salmonella gallinarum (strain 287/91 / NCTC 13346).